The following is a 469-amino-acid chain: Citrate synthase, mitochondrial (469 aa).

The transit peptide at 1-33 (MAPVMRLGSAALRSSIHLTSRQTAFTAARCYSS) directs the protein to the mitochondrion. Residue His352 is part of the active site.

The protein belongs to the citrate synthase family.

It is found in the mitochondrion matrix. It carries out the reaction oxaloacetate + acetyl-CoA + H2O = citrate + CoA + H(+). The protein operates within carbohydrate metabolism; tricarboxylic acid cycle; isocitrate from oxaloacetate: step 1/2. The protein is Citrate synthase, mitochondrial (cit-1) of Neurospora crassa (strain ATCC 24698 / 74-OR23-1A / CBS 708.71 / DSM 1257 / FGSC 987).